The primary structure comprises 465 residues: Citrate synthase-like protein (465 aa).

Positions 13-40 (HISDMVDSTKMNGNQSQDTAGRADTPVS) are disordered. Polar residues predominate over residues 21–31 (TKMNGNQSQDT). Active-site residues include H357 and D413.

The protein belongs to the citrate synthase family.

Its pathway is secondary metabolite biosynthesis. Its function is as follows. Citrate synthase-like protein; part of the gene cluster that mediates the biosynthesis of squalestatin S1 (SQS1, also known as zaragozic acid A), a heavily oxidized fungal polyketide that offers potent cholesterol lowering activity by targeting squalene synthase (SS). SQS1 is composed of a 2,8-dioxobicyclic[3.2.1]octane-3,4,5-tricarboxyclic acid core that is connected to two lipophilic polyketide arms. These initial steps feature the priming of an unusual benzoic acid starter unit onto the highly reducing polyketide synthase pks2, followed by oxaloacetate extension and product release to generate a tricarboxylic acid containing product. The phenylalanine ammonia lyase (PAL) M7 and the acyl-CoA ligase M9 are involved in transforming phenylalanine into benzoyl-CoA. The citrate synthase-like protein R3 is involved in connecting the C-alpha-carbons of the hexaketide chain and oxaloacetate to afford the tricarboxylic acid unit. The potential hydrolytic enzymes, M8 and M10, are in close proximity to pks2 and may participate in product release. On the other side, the tetraketide arm is synthesized by a the squalestatin tetraketide synthase pks1 and enzymatically esterified to the core in the last biosynthetic step, by the acetyltransferase M4. The biosynthesis of the tetraketide must involve 3 rounds of chain extension. After the first and second rounds methyl-transfer occurs, and in all rounds of extension the ketoreductase and dehydratase are active. The enoyl reductase and C-MeT of pks1 are not active in the final round of extension. The acetyltransferase M4 appears to have a broad substrate selectivity for its acyl CoA substrate, allowing the in vitro synthesis of novel squalestatins. The biosynthesis of SQS1 requires several oxidative steps likely performed by oxidoreductases M1, R1 and R2. Finally, in support of the identification of the cluster as being responsible for SQS1 production, the cluster contains a gene encoding a putative squalene synthase (SS) R6, suggesting a likely mechanism for self-resistance. The polypeptide is Citrate synthase-like protein (Phoma sp. (strain ATCC 20986 / MF5453)).